A 180-amino-acid chain; its full sequence is uncharacterized protein (180 aa).

It belongs to the isochorismatase family.

This is an uncharacterized protein from Bacillus subtilis (strain 168).